Consider the following 340-residue polypeptide: Phosphoribosylformylglycinamidine cyclo-ligase (340 aa).

Belongs to the AIR synthase family.

The protein localises to the cytoplasm. The enzyme catalyses 2-formamido-N(1)-(5-O-phospho-beta-D-ribosyl)acetamidine + ATP = 5-amino-1-(5-phospho-beta-D-ribosyl)imidazole + ADP + phosphate + H(+). The protein operates within purine metabolism; IMP biosynthesis via de novo pathway; 5-amino-1-(5-phospho-D-ribosyl)imidazole from N(2)-formyl-N(1)-(5-phospho-D-ribosyl)glycinamide: step 2/2. The protein is Phosphoribosylformylglycinamidine cyclo-ligase of Lactococcus lactis subsp. cremoris (strain MG1363).